Reading from the N-terminus, the 117-residue chain is Colipase (117 aa).

A signal peptide spans 1-22 (MNIFNILLPIVVLLLVFGLTAA). Cystine bridges form between C39–C50, C45–C61, C49–C83, C71–C91, and C85–C109.

The protein belongs to the colipase family. Forms a 1:1 stoichiometric complex with pancreatic lipase.

Its subcellular location is the secreted. In terms of biological role, colipase is a cofactor of pancreatic lipase. It allows the lipase to anchor itself to the lipid-water interface. Without colipase the enzyme is washed off by bile salts, which have an inhibitory effect on the lipase. The polypeptide is Colipase (clps) (Xenopus tropicalis (Western clawed frog)).